A 619-amino-acid polypeptide reads, in one-letter code: Chaperone protein HscA homolog (619 aa).

Belongs to the heat shock protein 70 family.

Chaperone involved in the maturation of iron-sulfur cluster-containing proteins. Has a low intrinsic ATPase activity which is markedly stimulated by HscB. The chain is Chaperone protein HscA homolog from Shewanella frigidimarina (strain NCIMB 400).